Here is a 161-residue protein sequence, read N- to C-terminus: Lipoprotein signal peptidase (161 aa).

2 helical membrane passes run 64-84 (YRVP…AWFY) and 92-114 (VLGR…DRVR). Catalysis depends on residues aspartate 120 and aspartate 138. A helical transmembrane segment spans residues 131–151 (WPAFNVADSAICVGVGMLLLA).

Belongs to the peptidase A8 family.

Its subcellular location is the cell inner membrane. It carries out the reaction Release of signal peptides from bacterial membrane prolipoproteins. Hydrolyzes -Xaa-Yaa-Zaa-|-(S,diacylglyceryl)Cys-, in which Xaa is hydrophobic (preferably Leu), and Yaa (Ala or Ser) and Zaa (Gly or Ala) have small, neutral side chains.. The protein operates within protein modification; lipoprotein biosynthesis (signal peptide cleavage). In terms of biological role, this protein specifically catalyzes the removal of signal peptides from prolipoproteins. This is Lipoprotein signal peptidase from Syntrophotalea carbinolica (strain DSM 2380 / NBRC 103641 / GraBd1) (Pelobacter carbinolicus).